The primary structure comprises 196 residues: DnaA initiator-associating protein DiaA (196 aa).

Positions 34 to 196 (LVQSLLNGNK…DNTLFPHQDD (163 aa)) constitute an SIS domain.

Belongs to the SIS family. DiaA subfamily. Homotetramer; dimer of dimers.

Required for the timely initiation of chromosomal replication via direct interactions with the DnaA initiator protein. This chain is DnaA initiator-associating protein DiaA, found in Cronobacter sakazakii (strain ATCC BAA-894) (Enterobacter sakazakii).